The sequence spans 472 residues: E1B 55 kDa protein (472 aa).

Residues 1 to 90 (MERPNPSVGG…GQRGEKRKLE (90 aa)) are disordered. Residues 32–44 (RLLAGAASARSGS) show a composition bias toward low complexity. Gly residues predominate over residues 45 to 57 (SAGGGGGGGGGGE). Residues Ser-468 and Ser-469 each carry the phosphoserine modification.

This sequence belongs to the adenoviridae E1B 55 kDa protein family. Interacts with host PML-4 and PML-5; this interaction promotes efficient subnuclear targeting of E1B-55K to PML nuclear bodies. Interacts with E4-ORF3 protein. Interacts with E4-ORF6 protein.

It localises to the host nucleus. The protein resides in the host cytoplasm. Functionally, plays a major role to prevent cellular inhibition of viral genome replication. Assembles an SCF-like E3 ubiquitin ligase complex based on the cellular proteins ELOB, ELOC, CUL5 and RBX1, in cooperation with viral E4orf6. This viral RING-type ligase ubiquitinates cellular substrates and targets them to proteasomal degradation: TP53/p53, LIG4, MRE11-RAD50-NBS1 (MRN) complex, ITGA3, DAXX and BLM. E1B-55K probably acts as the substrate-specific adapter of the SCF-like E3 ubiquitin ligase complex. Degradation of host TP53/p53 activity is essential for preventing E1A-induced TP53 accumulation that would otherwise lead to cell apoptosis and growth arrest. E1B-55K also inactivates TP53 transcription-factor activity by binding its transactivation domain. E1B-55K also functions as a SUMO1 E3 ligase for TP53 which causes the latter to be sequestered in promyelocytic leukemia (PML) nuclear bodies thereby contributing to maximal inhibition of TP53 function. The chain is E1B 55 kDa protein from Homo sapiens (Human).